The following is a 224-amino-acid chain: UPF0758 protein CV_3079 (224 aa).

The MPN domain maps to 102-224; it reads ALSSPQQVRD…AESFAERGWL (123 aa). Positions 173, 175, and 186 each coordinate Zn(2+). Positions 173–186 match the JAMM motif motif; that stretch reads HNHPSGVSEPSSAD.

It belongs to the UPF0758 family.

This is UPF0758 protein CV_3079 from Chromobacterium violaceum (strain ATCC 12472 / DSM 30191 / JCM 1249 / CCUG 213 / NBRC 12614 / NCIMB 9131 / NCTC 9757 / MK).